Reading from the N-terminus, the 43-residue chain is Protein PsbN (43 aa).

The helical transmembrane segment at 7–27 (IAIFISCLIVSFTGYALYTAF) threads the bilayer.

Belongs to the PsbN family.

Its subcellular location is the plastid. It is found in the chloroplast thylakoid membrane. In terms of biological role, may play a role in photosystem I and II biogenesis. This is Protein PsbN from Psilotum nudum (Whisk fern).